The primary structure comprises 339 residues: Serine/threonine-protein kinase pdik1l-B (339 aa).

The 325-residue stretch at 8–332 (YDLIREVGRG…LELKLIQIAF (325 aa)) folds into the Protein kinase domain. ATP contacts are provided by residues 14–22 (VGRGSYGLV) and lysine 37. Residue aspartate 164 is the Proton acceptor of the active site.

The protein belongs to the protein kinase superfamily. Ser/Thr protein kinase family.

It is found in the nucleus. The catalysed reaction is L-seryl-[protein] + ATP = O-phospho-L-seryl-[protein] + ADP + H(+). The enzyme catalyses L-threonyl-[protein] + ATP = O-phospho-L-threonyl-[protein] + ADP + H(+). The protein is Serine/threonine-protein kinase pdik1l-B (pdik1-b) of Xenopus laevis (African clawed frog).